We begin with the raw amino-acid sequence, 51 residues long: Insulin (51 aa).

Intrachain disulfides connect C7–C37, C19–C50, and C36–C41.

The protein belongs to the insulin family. As to quaternary structure, heterodimer of a B chain and an A chain linked by two disulfide bonds.

It is found in the secreted. Its function is as follows. Insulin decreases blood glucose concentration. It increases cell permeability to monosaccharides, amino acids and fatty acids. It accelerates glycolysis, the pentose phosphate cycle, and glycogen synthesis in liver. The chain is Insulin (INS) from Camelus dromedarius (Dromedary).